We begin with the raw amino-acid sequence, 246 residues long: Probable transcriptional regulatory protein ACP_0521 (246 aa).

Belongs to the TACO1 family.

The protein resides in the cytoplasm. The polypeptide is Probable transcriptional regulatory protein ACP_0521 (Acidobacterium capsulatum (strain ATCC 51196 / DSM 11244 / BCRC 80197 / JCM 7670 / NBRC 15755 / NCIMB 13165 / 161)).